A 428-amino-acid chain; its full sequence is D-serine dehydratase (428 aa).

K57 is modified (N6-(pyridoxal phosphate)lysine). Positions 203, 210, 255, 286, and 287 each coordinate pyridoxal 5'-phosphate. Zn(2+) contacts are provided by H398 and C400.

This sequence belongs to the DSD1 family. In terms of assembly, homodimer. Pyridoxal 5'-phosphate is required as a cofactor. Requires Zn(2+) as cofactor.

It catalyses the reaction D-serine = pyruvate + NH4(+). Sodium cyanoborohydride, N-ethylmaleimide, hydroxylamine, phenyhydrazin and EDTA are inhibitors of the catalytic activity. In terms of biological role, catalyzes the conversion of D-serine to pyruvate and ammonia. May play a role in D-serine detoxification. In Saccharomyces cerevisiae (strain ATCC 204508 / S288c) (Baker's yeast), this protein is D-serine dehydratase.